Reading from the N-terminus, the 379-residue chain is Gonadotropin-releasing hormone II receptor (379 aa).

The Extracellular segment spans residues 1 to 40; the sequence is MSAGNGTPWGSAAGEESWAASGVAVEGSELPTFSAAAKVR. The chain crosses the membrane as a helical span at residues 41 to 60; sequence VGVTIVLFVSSAGGNLAVLW. The Cytoplasmic segment spans residues 61-76; that stretch reads SVTRPQPSQLRPSPVR. Residues 77–96 traverse the membrane as a helical segment; the sequence is TLFAHLAAADLLVTFVVMPL. Residues 97–114 lie on the Extracellular side of the membrane; sequence DATWNITVQWLAEDIACR. Residue Asn-101 is glycosylated (N-linked (GlcNAc...) asparagine). A disulfide bridge connects residues Cys-113 and Cys-188. Residues 115–136 form a helical membrane-spanning segment; it reads TLMFLKLMAMYSAAFLPVVIGL. Residues 137–160 are Cytoplasmic-facing; sequence DRQAAVLNPLGSRSGVRKLLGAAW. Residues 161 to 178 traverse the membrane as a helical segment; sequence GLSFLLALPQLFLFHTVH. At 179–204 the chain is on the extracellular side; it reads RAGPVPFTQCVTKGSFKARWQETTYN. Residues 205–224 traverse the membrane as a helical segment; it reads LFTFRCLFLLPLTAMAICYS. Residues 225–278 lie on the Cytoplasmic side of the membrane; that stretch reads HIVLSVSSPQTRKGSHAPAGEFALCRSFDNCPRVRLWALRLALLILLTFILCWT. Residues 279-297 traverse the membrane as a helical segment; sequence PYYLLGLWYWFSPTMLTEV. Over 298–303 the chain is Extracellular; sequence PPSLSH. A helical membrane pass occupies residues 304–323; sequence ILFLFGLLNAPLDPLLYGAF. Over 324–379 the chain is Cytoplasmic; that stretch reads TLGCQRGHQELSIDSSNEGSGRMLQQEIHALRQQEVQKTVTSRSAGETKDISITSI.

This sequence belongs to the G-protein coupled receptor 1 family. Post-translationally, phosphorylated on the C-terminal cytoplasmic tail.

The protein localises to the cell membrane. Functionally, receptor for gonadotropin releasing hormone II (GnRH II). This receptor mediates its action by association with G proteins that activate a phosphatidylinositol-calcium second messenger system. The protein is Gonadotropin-releasing hormone II receptor (GNRHR2) of Macaca mulatta (Rhesus macaque).